A 370-amino-acid polypeptide reads, in one-letter code: Lipoyl synthase 1, chloroplastic (370 aa).

Disordered regions lie at residues 1 to 25 (MMQS…PVCR) and 39 to 67 (EAAP…KKPA). The transit peptide at 1 to 37 (MMQSSLARPLPRPPIRPACGNPVCRSRPGSVSVARCR) directs the protein to the chloroplast. Residues C95, C100, C106, C132, C136, C139, and S347 each coordinate [4Fe-4S] cluster. The Radical SAM core domain maps to 115 to 336 (GEGDGIATAT…KEYGESVGFR (222 aa)).

This sequence belongs to the radical SAM superfamily. Lipoyl synthase family. [4Fe-4S] cluster serves as cofactor.

Its subcellular location is the plastid. It is found in the chloroplast. It carries out the reaction [[Fe-S] cluster scaffold protein carrying a second [4Fe-4S](2+) cluster] + N(6)-octanoyl-L-lysyl-[protein] + 2 oxidized [2Fe-2S]-[ferredoxin] + 2 S-adenosyl-L-methionine + 4 H(+) = [[Fe-S] cluster scaffold protein] + N(6)-[(R)-dihydrolipoyl]-L-lysyl-[protein] + 4 Fe(3+) + 2 hydrogen sulfide + 2 5'-deoxyadenosine + 2 L-methionine + 2 reduced [2Fe-2S]-[ferredoxin]. The protein operates within protein modification; protein lipoylation via endogenous pathway; protein N(6)-(lipoyl)lysine from octanoyl-[acyl-carrier-protein]: step 2/2. In terms of biological role, catalyzes the radical-mediated insertion of two sulfur atoms into the C-6 and C-8 positions of the octanoyl moiety bound to the lipoyl domains of lipoate-dependent enzymes, thereby converting the octanoylated domains into lipoylated derivatives. This Oryza sativa subsp. indica (Rice) protein is Lipoyl synthase 1, chloroplastic.